A 423-amino-acid chain; its full sequence is Imidazolonepropionase (423 aa).

Residues H78 and H80 each contribute to the Fe(3+) site. Zn(2+) contacts are provided by H78 and H80. 3 residues coordinate 4-imidazolone-5-propanoate: R87, Y150, and H183. N-formimidoyl-L-glutamate is bound at residue Y150. Fe(3+) is bound at residue H247. A Zn(2+)-binding site is contributed by H247. E250 lines the 4-imidazolone-5-propanoate pocket. D322 provides a ligand contact to Fe(3+). Residue D322 coordinates Zn(2+). N-formimidoyl-L-glutamate contacts are provided by N324 and G326. A 4-imidazolone-5-propanoate-binding site is contributed by S327.

The protein belongs to the metallo-dependent hydrolases superfamily. HutI family. The cofactor is Zn(2+). It depends on Fe(3+) as a cofactor.

Its subcellular location is the cytoplasm. It carries out the reaction 4-imidazolone-5-propanoate + H2O = N-formimidoyl-L-glutamate. Its pathway is amino-acid degradation; L-histidine degradation into L-glutamate; N-formimidoyl-L-glutamate from L-histidine: step 3/3. Its function is as follows. Catalyzes the hydrolytic cleavage of the carbon-nitrogen bond in imidazolone-5-propanoate to yield N-formimidoyl-L-glutamate. It is the third step in the universal histidine degradation pathway. This is Imidazolonepropionase from Bacillus cytotoxicus (strain DSM 22905 / CIP 110041 / 391-98 / NVH 391-98).